The following is a 254-amino-acid chain: Probable derlin-2 homolog (254 aa).

Residues 1–17 (MAQPFEDWYKNLPIVTK) are Cytoplasmic-facing. A helical transmembrane segment spans residues 18-38 (IYMTGCVVTSVSVYLGLVGPL). Over 39-95 (RLYLNFPLVFGKYEFWRLFTNFFFYDEIGMNFFFHMYFLVRHSRLLEESSFRGRSAD) the chain is Lumenal. The chain crosses the membrane as a helical span at residues 96 to 116 (YLFMWIFGSFLLLIMDAFLFY). Topologically, residues 117–118 (TK) are cytoplasmic. The chain crosses the membrane as a helical span at residues 119-139 (IVTKVLFLAPSIAFMVIYVWS). Over 140–146 (RRNPNMH) the chain is Lumenal. Residues 147 to 167 (ISFLGLFTFSAPYLPWVILIM) form a helical membrane-spanning segment. Over 168–254 (GYLFNHDLTT…FLNEDDLDQQ (87 aa)) the chain is Cytoplasmic.

Belongs to the derlin family.

It is found in the endoplasmic reticulum membrane. May be involved in the degradation process of specific misfolded endoplasmic reticulum (ER) luminal proteins. May also be involved in endoplasmic reticulum stress-induced pre-emptive quality control, a mechanism that selectively attenuates the translocation of newly synthesized proteins into the endoplasmic reticulum and reroutes them to the cytosol for proteasomal degradation. In Dictyostelium discoideum (Social amoeba), this protein is Probable derlin-2 homolog (derl2).